Here is a 120-residue protein sequence, read N- to C-terminus: Spermidine export protein MdtJ (120 aa).

Helical transmembrane passes span 1–21 (MFYW…TLSM), 31–51 (AGFI…SFAV), 54–74 (IALG…ITIF), and 81–101 (EALS…IVLI).

It belongs to the drug/metabolite transporter (DMT) superfamily. Small multidrug resistance (SMR) (TC 2.A.7.1) family. MdtJ subfamily. Forms a complex with MdtI.

Its subcellular location is the cell inner membrane. Its function is as follows. Catalyzes the excretion of spermidine. The protein is Spermidine export protein MdtJ of Salmonella paratyphi A (strain ATCC 9150 / SARB42).